Reading from the N-terminus, the 281-residue chain is Diaminopimelate epimerase (281 aa).

Asparagine 13, glutamine 51, and asparagine 70 together coordinate substrate. Residue cysteine 79 is the Proton donor of the active site. Substrate-binding positions include 80 to 81, asparagine 163, asparagine 196, and 214 to 215; these read GN and ER. Residue cysteine 223 is the Proton acceptor of the active site. 224–225 provides a ligand contact to substrate; it reads GS.

This sequence belongs to the diaminopimelate epimerase family. In terms of assembly, homodimer.

It localises to the cytoplasm. The catalysed reaction is (2S,6S)-2,6-diaminopimelate = meso-2,6-diaminopimelate. It functions in the pathway amino-acid biosynthesis; L-lysine biosynthesis via DAP pathway; DL-2,6-diaminopimelate from LL-2,6-diaminopimelate: step 1/1. Functionally, catalyzes the stereoinversion of LL-2,6-diaminopimelate (L,L-DAP) to meso-diaminopimelate (meso-DAP), a precursor of L-lysine and an essential component of the bacterial peptidoglycan. The protein is Diaminopimelate epimerase of Alcanivorax borkumensis (strain ATCC 700651 / DSM 11573 / NCIMB 13689 / SK2).